Consider the following 349-residue polypeptide: NADH-ubiquinone oxidoreductase chain 2 (349 aa).

The next 10 helical transmembrane spans lie at P3–S23, H25–A45, A66–I86, V98–V118, I149–N171, I178–A197, L202–L219, L240–F260, G274–L294, and F319–L339.

The protein belongs to the complex I subunit 2 family.

Its subcellular location is the mitochondrion inner membrane. The enzyme catalyses a ubiquinone + NADH + 5 H(+)(in) = a ubiquinol + NAD(+) + 4 H(+)(out). In terms of biological role, core subunit of the mitochondrial membrane respiratory chain NADH dehydrogenase (Complex I) that is believed to belong to the minimal assembly required for catalysis. Complex I functions in the transfer of electrons from NADH to the respiratory chain. The immediate electron acceptor for the enzyme is believed to be ubiquinone. The protein is NADH-ubiquinone oxidoreductase chain 2 (MT-ND2) of Salmo salar (Atlantic salmon).